Consider the following 149-residue polypeptide: Protein AE7-like 2 (149 aa).

This sequence belongs to the MIP18 family.

Its function is as follows. May play a role in chromosome segregation through establishment of sister chromatid cohesion. Unable to complement ae7 mutants, and thus probably not involved in the cytosolic iron-sulfur assembly (CIA) pathway. This Arabidopsis thaliana (Mouse-ear cress) protein is Protein AE7-like 2.